A 792-amino-acid chain; its full sequence is LPS-assembly protein LptD (792 aa).

Residues 1 to 22 (MYRVLRLLPLPLSVAISLSALA) form the signal peptide.

This sequence belongs to the LptD family. As to quaternary structure, component of the lipopolysaccharide transport and assembly complex. Interacts with LptE and LptA.

The protein resides in the cell outer membrane. Functionally, together with LptE, is involved in the assembly of lipopolysaccharide (LPS) at the surface of the outer membrane. In Xylella fastidiosa (strain 9a5c), this protein is LPS-assembly protein LptD.